The chain runs to 366 residues: Ribosomal RNA large subunit methyltransferase M (366 aa).

Residues Ser-188, 221 to 224 (CPGG), Asp-240, Asp-260, and Asp-277 contribute to the S-adenosyl-L-methionine site. Lys-306 (proton acceptor) is an active-site residue.

Belongs to the class I-like SAM-binding methyltransferase superfamily. RNA methyltransferase RlmE family. RlmM subfamily. Monomer.

Its subcellular location is the cytoplasm. The enzyme catalyses cytidine(2498) in 23S rRNA + S-adenosyl-L-methionine = 2'-O-methylcytidine(2498) in 23S rRNA + S-adenosyl-L-homocysteine + H(+). Catalyzes the 2'-O-methylation at nucleotide C2498 in 23S rRNA. In Escherichia coli O127:H6 (strain E2348/69 / EPEC), this protein is Ribosomal RNA large subunit methyltransferase M.